The following is a 451-amino-acid chain: Exodeoxyribonuclease 7 large subunit (451 aa).

Belongs to the XseA family. Heterooligomer composed of large and small subunits.

Its subcellular location is the cytoplasm. The catalysed reaction is Exonucleolytic cleavage in either 5'- to 3'- or 3'- to 5'-direction to yield nucleoside 5'-phosphates.. Functionally, bidirectionally degrades single-stranded DNA into large acid-insoluble oligonucleotides, which are then degraded further into small acid-soluble oligonucleotides. The polypeptide is Exodeoxyribonuclease 7 large subunit (Neisseria meningitidis serogroup B (strain ATCC BAA-335 / MC58)).